Here is a 470-residue protein sequence, read N- to C-terminus: 3-isopropylmalate dehydratase large subunit (470 aa).

Positions 294-307 are enriched in polar residues; the sequence is PDQNTGISGSTPNP. Residues 294-313 are disordered; it reads PDQNTGISGSTPNPSDAADD. [4Fe-4S] cluster-binding residues include cysteine 347, cysteine 407, and cysteine 410.

Belongs to the aconitase/IPM isomerase family. LeuC type 1 subfamily. Heterodimer of LeuC and LeuD. Requires [4Fe-4S] cluster as cofactor.

The enzyme catalyses (2R,3S)-3-isopropylmalate = (2S)-2-isopropylmalate. It functions in the pathway amino-acid biosynthesis; L-leucine biosynthesis; L-leucine from 3-methyl-2-oxobutanoate: step 2/4. In terms of biological role, catalyzes the isomerization between 2-isopropylmalate and 3-isopropylmalate, via the formation of 2-isopropylmaleate. This is 3-isopropylmalate dehydratase large subunit from Akkermansia muciniphila (strain ATCC BAA-835 / DSM 22959 / JCM 33894 / BCRC 81048 / CCUG 64013 / CIP 107961 / Muc).